A 147-amino-acid polypeptide reads, in one-letter code: Hemoglobin subunit gamma-2 (147 aa).

In terms of domain architecture, Globin spans 3–147 (NFTAEDKAAI…VASALGSRYH (145 aa)). Threonine 13 is modified (phosphothreonine). 3 positions are modified to phosphoserine: serine 45, serine 51, and serine 53. An N6-acetyllysine modification is found at lysine 60. Histidine 64 lines the heme b pocket. N6-acetyllysine is present on lysine 83. Position 93 (histidine 93) interacts with heme b. S-nitrosocysteine is present on cysteine 94. 2 positions are modified to phosphoserine: serine 140 and serine 144.

Belongs to the globin family. As to quaternary structure, heterotetramer of two alpha chains and two gamma chains in fetal hemoglobin (Hb F). As to expression, red blood cells.

Functionally, gamma chains make up the fetal hemoglobin F, in combination with alpha chains. The sequence is that of Hemoglobin subunit gamma-2 (HBG2) from Cebus albifrons (White-fronted capuchin).